The chain runs to 88 residues: Toxin RelE2 (88 aa).

Belongs to the RelE toxin family.

In terms of biological role, toxic component of a type II toxin-antitoxin (TA) system. Its toxic effect is neutralized by coexpression with cognate antitoxin RelB2 but no other ParD or RelB antitoxin. In Caulobacter vibrioides (strain ATCC 19089 / CIP 103742 / CB 15) (Caulobacter crescentus), this protein is Toxin RelE2 (relE2).